Reading from the N-terminus, the 195-residue chain is Imidazoleglycerol-phosphate dehydratase (195 aa).

It belongs to the imidazoleglycerol-phosphate dehydratase family.

The protein localises to the cytoplasm. It carries out the reaction D-erythro-1-(imidazol-4-yl)glycerol 3-phosphate = 3-(imidazol-4-yl)-2-oxopropyl phosphate + H2O. The protein operates within amino-acid biosynthesis; L-histidine biosynthesis; L-histidine from 5-phospho-alpha-D-ribose 1-diphosphate: step 6/9. This chain is Imidazoleglycerol-phosphate dehydratase, found in Geobacter sp. (strain M21).